The following is a 278-amino-acid chain: Biotin synthase (278 aa).

Positions 1–227 (MQIMLCAISN…QSVVMVAGGR (227 aa)) constitute a Radical SAM core domain. [4Fe-4S] cluster-binding residues include Cys-16, Cys-20, and Cys-23. Cys-60, Cys-95, and Cys-153 together coordinate [2Fe-2S] cluster.

Belongs to the radical SAM superfamily. Biotin synthase family. As to quaternary structure, homodimer. [4Fe-4S] cluster serves as cofactor. [2Fe-2S] cluster is required as a cofactor.

It carries out the reaction (4R,5S)-dethiobiotin + (sulfur carrier)-SH + 2 reduced [2Fe-2S]-[ferredoxin] + 2 S-adenosyl-L-methionine = (sulfur carrier)-H + biotin + 2 5'-deoxyadenosine + 2 L-methionine + 2 oxidized [2Fe-2S]-[ferredoxin]. The protein operates within cofactor biosynthesis; biotin biosynthesis; biotin from 7,8-diaminononanoate: step 2/2. Functionally, catalyzes the conversion of dethiobiotin (DTB) to biotin by the insertion of a sulfur atom into dethiobiotin via a radical-based mechanism. The polypeptide is Biotin synthase (Campylobacter jejuni (strain RM1221)).